The sequence spans 88 residues: Large ribosomal subunit protein bL27 (88 aa).

The interval 1–24 (MAHKKAGGSSRNGRDSAGQRRGVK) is disordered.

The protein belongs to the bacterial ribosomal protein bL27 family.

This Syntrophobacter fumaroxidans (strain DSM 10017 / MPOB) protein is Large ribosomal subunit protein bL27.